The primary structure comprises 802 residues: Fibroblast growth factor receptor 3 (802 aa).

The Ig-like C2-type 1 domain maps to 27 to 115; the sequence is PDYLMVEQPP…ILRNFTIRVT (89 aa). An intrachain disulfide couples cysteine 52 to cysteine 98. N-linked (GlcNAc...) asparagine glycans are attached at residues asparagine 74, asparagine 87, and asparagine 109. Residues 116–148 are disordered; that stretch reads DLPSSGDDEDDDDDDDDETEDREPPRWTQPERM. Residues 121–136 show a composition bias toward acidic residues; that stretch reads GDDEDDDDDDDDETED. Over residues 137 to 148 the composition is skewed to basic and acidic residues; sequence REPPRWTQPERM. Ig-like C2-type domains follow at residues 140–233 and 242–342; these read PRWT…YQLD and PILQ…FWLH. Cysteine 165 and cysteine 217 are joined by a disulfide. Asparagine 214, asparagine 251, asparagine 283, asparagine 303, and asparagine 315 each carry an N-linked (GlcNAc...) asparagine glycan. The cysteines at positions 264 and 326 are disulfide-linked. A helical membrane pass occupies residues 363–383; that stretch reads ITVLIVVTSTIVFILLVIIVI. Residues 384–802 are Cytoplasmic-facing; that stretch reads THLMKVPSKK…HQQHNGAIPT (419 aa). Residues 462–751 enclose the Protein kinase domain; sequence LTLGKPLGEG…LTVTSTNEYL (290 aa). Residues 468-476 and lysine 498 each bind ATP; that span reads LGEGCFGQV. Residue aspartate 607 is the Proton acceptor of the active site. Tyrosine 637, tyrosine 638, tyrosine 714, and tyrosine 750 each carry phosphotyrosine; by autocatalysis.

It belongs to the protein kinase superfamily. Tyr protein kinase family. Fibroblast growth factor receptor subfamily. In terms of assembly, monomer. Homodimer after ligand binding. In terms of processing, autophosphorylated. Binding of FGF family members together with heparan sulfate proteoglycan or heparin promotes receptor dimerization and autophosphorylation on tyrosine residues. Autophosphorylation occurs in trans between the two FGFR molecules present in the dimer.

The protein resides in the cell membrane. The enzyme catalyses L-tyrosyl-[protein] + ATP = O-phospho-L-tyrosyl-[protein] + ADP + H(+). With respect to regulation, present in an inactive conformation in the absence of bound ligand. Ligand binding leads to dimerization and activation by autophosphorylation on tyrosine residues. Its function is as follows. Tyrosine-protein kinase that acts as a cell-surface receptor for fibroblast growth factors and plays an essential role in the regulation of cell proliferation, differentiation and apoptosis. Plays an essential role in the regulation of chondrocyte differentiation, proliferation and apoptosis, and is required for normal skeleton development. Regulates both osteogenesis and postnatal bone mineralization by osteoblasts. Promotes apoptosis in chondrocytes, but can also promote cancer cell proliferation. Phosphorylates PLCG1, CBL and FRS2. Ligand binding leads to the activation of several signaling cascades. Activation of PLCG1 leads to the production of the cellular signaling molecules diacylglycerol and inositol 1,4,5-trisphosphate. Phosphorylation of FRS2 triggers recruitment of GRB2, GAB1, PIK3R1 and SOS1, and mediates activation of RAS, MAPK1/ERK2, MAPK3/ERK1 and the MAP kinase signaling pathway, as well as of the AKT1 signaling pathway. This Xenopus laevis (African clawed frog) protein is Fibroblast growth factor receptor 3 (fgfr3).